Reading from the N-terminus, the 348-residue chain is MSDRQAALDMALKQIEKQFGKGSIMKLGEQTETRISTVPSGSLALDAALGVGGYPRGRIIEVYGPESSGKTTVALHAIAEVQQQGGQAAFIDAEHALDPVYAQKLGVNIDELLLSQPDTGEQALEIAEALVRSGAVDIVVIDSVAALVPKAEIEGDMGDSHVGLQARLMSQALRKLSGAINKSKTIAIFINQIREKVGVMFGNPETTPGGRALKFYSSVRLEVRRAEQLKQGNDVMGNKTKIKVVKNKVAPPFRTAEVDIMYGEGISKEGEIIDLGTELDIVQKSGAWYSYQEERLGQGRENAKQFLKENKDILLMIQEQIREHYGLDTGGAAPAQEDEAQAQEELEF.

64–71 serves as a coordination point for ATP; the sequence is GPESSGKT. A disordered region spans residues 328–348; the sequence is DTGGAAPAQEDEAQAQEELEF. A compositionally biased stretch (acidic residues) spans 336 to 348; it reads QEDEAQAQEELEF.

This sequence belongs to the RecA family.

Its subcellular location is the cytoplasm. Its function is as follows. Can catalyze the hydrolysis of ATP in the presence of single-stranded DNA, the ATP-dependent uptake of single-stranded DNA by duplex DNA, and the ATP-dependent hybridization of homologous single-stranded DNAs. It interacts with LexA causing its activation and leading to its autocatalytic cleavage. This is Protein RecA from Bacillus licheniformis (strain ATCC 14580 / DSM 13 / JCM 2505 / CCUG 7422 / NBRC 12200 / NCIMB 9375 / NCTC 10341 / NRRL NRS-1264 / Gibson 46).